The primary structure comprises 388 residues: Alanine racemase, catabolic (388 aa).

The active-site Proton acceptor; specific for D-alanine is Lys-46. At Lys-46 the chain carries N6-(pyridoxal phosphate)lysine. Arg-145 contributes to the substrate binding site. The active-site Proton acceptor; specific for L-alanine is Tyr-267. Residue Met-315 participates in substrate binding.

It belongs to the alanine racemase family. Pyridoxal 5'-phosphate serves as cofactor.

The enzyme catalyses L-alanine = D-alanine. Isomerizes L-alanine to D-alanine which is then oxidized to pyruvate by DadA. This Agrobacterium fabrum (strain C58 / ATCC 33970) (Agrobacterium tumefaciens (strain C58)) protein is Alanine racemase, catabolic (dadB).